An 838-amino-acid chain; its full sequence is AP-4 complex subunit beta (838 aa).

Residues 582 to 673 (NSSKQTTSIN…NQNNNQNNNQ (92 aa)) are hinge. The segment at 648-683 (ITDGNQNNNQNNNQNNNQNNNQNNNQNNQNNNNQNN) is disordered. Positions 652–683 (NQNNNQNNNQNNNQNNNQNNNQNNQNNNNQNN) are enriched in low complexity. The ear stretch occupies residues 674–838 (NNQNNNNQNN…LSIPIPKIFN (165 aa)).

This sequence belongs to the adaptor complexes large subunit family. May be part of the adaptor protein complex 4 (AP-4), a heterotetramer composed of two large adaptins (epsilon-type subunitand beta-type subunit), a medium adaptin (mu-type subunit) and a small adaptin (sigma-type).

It localises to the golgi apparatus. Its subcellular location is the trans-Golgi network membrane. Functionally, probable component of an adaptor protein complex. Adaptor protein complexes are vesicle coat components involved both in vesicle formation and cargo selection. They control the vesicular transport of proteins in different trafficking pathways. The chain is AP-4 complex subunit beta (ap4b1) from Dictyostelium discoideum (Social amoeba).